Consider the following 214-residue polypeptide: Phosphatidylserine decarboxylase proenzyme (214 aa).

The active-site Schiff-base intermediate with substrate; via pyruvic acid is the Ser-182. Ser-182 carries the post-translational modification Pyruvic acid (Ser); by autocatalysis.

This sequence belongs to the phosphatidylserine decarboxylase family. PSD-A subfamily. As to quaternary structure, heterodimer of a large membrane-associated beta subunit and a small pyruvoyl-containing alpha subunit. Requires pyruvate as cofactor. In terms of processing, is synthesized initially as an inactive proenzyme. Formation of the active enzyme involves a self-maturation process in which the active site pyruvoyl group is generated from an internal serine residue via an autocatalytic post-translational modification. Two non-identical subunits are generated from the proenzyme in this reaction, and the pyruvate is formed at the N-terminus of the alpha chain, which is derived from the carboxyl end of the proenzyme. The post-translation cleavage follows an unusual pathway, termed non-hydrolytic serinolysis, in which the side chain hydroxyl group of the serine supplies its oxygen atom to form the C-terminus of the beta chain, while the remainder of the serine residue undergoes an oxidative deamination to produce ammonia and the pyruvoyl prosthetic group on the alpha chain.

The protein localises to the cell membrane. The catalysed reaction is a 1,2-diacyl-sn-glycero-3-phospho-L-serine + H(+) = a 1,2-diacyl-sn-glycero-3-phosphoethanolamine + CO2. Its pathway is phospholipid metabolism; phosphatidylethanolamine biosynthesis; phosphatidylethanolamine from CDP-diacylglycerol: step 2/2. In terms of biological role, catalyzes the formation of phosphatidylethanolamine (PtdEtn) from phosphatidylserine (PtdSer). The chain is Phosphatidylserine decarboxylase proenzyme from Burkholderia cenocepacia (strain HI2424).